A 101-amino-acid polypeptide reads, in one-letter code: DNA-binding protein HU (101 aa).

It belongs to the bacterial histone-like protein family. Homodimer.

Histone-like DNA-binding protein which is capable of wrapping DNA to stabilize it, and thus to prevent its denaturation under extreme environmental conditions. The polypeptide is DNA-binding protein HU (hup) (Rickettsia bellii (strain RML369-C)).